The sequence spans 157 residues: Transmembrane protein 50A (157 aa).

Ser2 is modified (N-acetylserine). Ser2 carries the post-translational modification Phosphoserine. Transmembrane regions (helical) follow at residues 26 to 46 (IAAG…AVIY), 58 to 78 (ACGV…NGQV), 95 to 115 (IWLF…MWIL), and 126 to 146 (IVYP…GGLV).

It belongs to the UPF0220 family.

The protein localises to the membrane. This Homo sapiens (Human) protein is Transmembrane protein 50A (TMEM50A).